Reading from the N-terminus, the 193-residue chain is NADH-quinone oxidoreductase subunit B (193 aa).

[4Fe-4S] cluster is bound by residues C72, C73, C137, and C167.

The protein belongs to the complex I 20 kDa subunit family. In terms of assembly, NDH-1 is composed of 14 different subunits. Subunits NuoB, C, D, E, F, and G constitute the peripheral sector of the complex. [4Fe-4S] cluster serves as cofactor.

It localises to the cell inner membrane. It catalyses the reaction a quinone + NADH + 5 H(+)(in) = a quinol + NAD(+) + 4 H(+)(out). In terms of biological role, NDH-1 shuttles electrons from NADH, via FMN and iron-sulfur (Fe-S) centers, to quinones in the respiratory chain. The immediate electron acceptor for the enzyme in this species is believed to be ubiquinone. Couples the redox reaction to proton translocation (for every two electrons transferred, four hydrogen ions are translocated across the cytoplasmic membrane), and thus conserves the redox energy in a proton gradient. This is NADH-quinone oxidoreductase subunit B from Bartonella henselae (strain ATCC 49882 / DSM 28221 / CCUG 30454 / Houston 1) (Rochalimaea henselae).